We begin with the raw amino-acid sequence, 451 residues long: Signal recognition particle protein (451 aa).

Residues 107 to 114 (GLQGSGKT), 190 to 194 (DTAGR), and 248 to 251 (TKTD) each bind GTP.

Belongs to the GTP-binding SRP family. SRP54 subfamily. In terms of assembly, part of the signal recognition particle protein translocation system, which is composed of SRP and FtsY. SRP is a ribonucleoprotein composed of Ffh and a 4.5S RNA molecule.

It localises to the cytoplasm. The catalysed reaction is GTP + H2O = GDP + phosphate + H(+). Functionally, involved in targeting and insertion of nascent membrane proteins into the cytoplasmic membrane. Binds to the hydrophobic signal sequence of the ribosome-nascent chain (RNC) as it emerges from the ribosomes. The SRP-RNC complex is then targeted to the cytoplasmic membrane where it interacts with the SRP receptor FtsY. Interaction with FtsY leads to the transfer of the RNC complex to the Sec translocase for insertion into the membrane, the hydrolysis of GTP by both Ffh and FtsY, and the dissociation of the SRP-FtsY complex into the individual components. This chain is Signal recognition particle protein, found in Buchnera aphidicola subsp. Acyrthosiphon pisum (strain APS) (Acyrthosiphon pisum symbiotic bacterium).